The chain runs to 167 residues: Endothelin-3 (167 aa).

Residues 1–19 form the signal peptide; that stretch reads MELGLWLLLGLTVTSAAAA. Residues 20–50 constitute a propeptide that is removed on maturation; that stretch reads LPAQPGNAGQERGPGRSGDQEEKRVPAHHRP. Residues 22–45 are disordered; sequence AQPGNAGQERGPGRSGDQEEKRVP. 2 disulfide bridges follow: C53–C67 and C55–C63. A propeptide spanning residues 74–167 is cleaved from the precursor; sequence INTPEQTVPY…KSRTDKVHQP (94 aa). The interval 85-112 is disordered; sequence LSNHRGSLRGKRSSGPVPESSQSSPQTR. Positions 97-109 are enriched in low complexity; the sequence is SSGPVPESSQSSP. Residues 115 to 135 form an endothelin-like region; it reads CACSGVDDKACAYFCAHVTSY. Positions 140–149 are enriched in basic and acidic residues; sequence EKAAAEEKQE. The segment at 140 to 167 is disordered; it reads EKAAAEEKQETGGPRQRLKSRTDKVHQP.

Belongs to the endothelin/sarafotoxin family.

Its subcellular location is the secreted. In terms of biological role, endothelins are endothelium-derived vasoconstrictor peptides. In Rattus norvegicus (Rat), this protein is Endothelin-3 (Edn3).